Consider the following 249-residue polypeptide: Probable transglycosylase SceD 2 (249 aa).

Residues 1–27 (MKKTVIASTLAVGLGVTGIAAGNSADA) form the signal peptide. 2 stretches are compositionally biased toward low complexity: residues 80–95 (WSYG…ASSE) and 103–171 (QQTA…SSSS). The segment at 80–203 (WSYGEGSGEG…PSSGASGKFQ (124 aa)) is disordered. 2 stretches are compositionally biased toward polar residues: residues 172 to 182 (GVNAHLQQIAQ) and 192 to 203 (TNPSSGASGKFQ).

The protein belongs to the transglycosylase family. SceD subfamily.

It is found in the secreted. Is able to cleave peptidoglycan and affects clumping and separation of bacterial cells. The chain is Probable transglycosylase SceD 2 (sceD2) from Staphylococcus saprophyticus subsp. saprophyticus (strain ATCC 15305 / DSM 20229 / NCIMB 8711 / NCTC 7292 / S-41).